A 308-amino-acid polypeptide reads, in one-letter code: Eukaryotic translation initiation factor 3 subunit G-A (308 aa).

Disordered stretches follow at residues 1–35 (MPTG…KPDP) and 177–226 (TGDK…ADDN). Over residues 185 to 194 (GAEPEPAQAP) the composition is skewed to low complexity. Over residues 209–226 (GGSRRGESMQPNRRADDN) the composition is skewed to basic and acidic residues. Residues 227 to 305 (ATIRVTNLSE…LILNVEWAKP (79 aa)) form the RRM domain.

Belongs to the eIF-3 subunit G family. In terms of assembly, component of the eukaryotic translation initiation factor 3 (eIF-3) complex, which is composed of 13 subunits: eif3a, eif3b, eif3c, eif3d, eif3e, eif3f, eif3g, eif3h, eif3i, eif3j, eif3k, eif3l and eif3m.

The protein resides in the cytoplasm. In terms of biological role, RNA-binding component of the eukaryotic translation initiation factor 3 (eIF-3) complex, which is involved in protein synthesis of a specialized repertoire of mRNAs and, together with other initiation factors, stimulates binding of mRNA and methionyl-tRNAi to the 40S ribosome. The eIF-3 complex specifically targets and initiates translation of a subset of mRNAs involved in cell proliferation. This subunit can bind 18S rRNA. This is Eukaryotic translation initiation factor 3 subunit G-A (eif3g-a) from Xenopus laevis (African clawed frog).